The following is a 153-amino-acid chain: Superoxide dismutase [Cu-Zn] (153 aa).

Cu cation contacts are provided by histidine 45, histidine 47, and histidine 62. Residues cysteine 56 and cysteine 145 are joined by a disulfide bond. Zn(2+) is bound by residues histidine 62, histidine 70, histidine 79, and aspartate 82. Histidine 119 provides a ligand contact to Cu cation.

This sequence belongs to the Cu-Zn superoxide dismutase family. Homodimer. Requires Cu cation as cofactor. It depends on Zn(2+) as a cofactor.

It localises to the cytoplasm. It carries out the reaction 2 superoxide + 2 H(+) = H2O2 + O2. Its function is as follows. Destroys radicals which are normally produced within the cells and which are toxic to biological systems. The sequence is that of Superoxide dismutase [Cu-Zn] from Drosophila willistoni (Fruit fly).